The chain runs to 1502 residues: Ras guanine nucleotide exchange factor P (1502 aa).

A Calponin-homology (CH) domain is found at 84–187 (FIIDNQVLDW…LLYSLMKFSE (104 aa)). Disordered regions lie at residues 216 to 242 (AQSSSSSPTTSTSASTSTSTSPSSSNE), 325 to 436 (QQQQ…PNNN), 456 to 534 (EDNT…VGRG), and 589 to 935 (TTTA…NQNN). 4 stretches are compositionally biased toward low complexity: residues 218–242 (SSSSSPTTSTSASTSTSTSPSSSNE), 325–345 (QQQQPPPQTSTCTTTQPTTTT), 371–400 (TTSSIIKKAAPAPLKKPSPANTSSNSLLNH), and 407–421 (SSSTASSAINTPIST). Positions 287–328 (QQQQQQQQQQQQQQQQQQQQQQQQQQQQQQQQQQQQQQQQQQ) form a coiled coil. The span at 422 to 436 (PSTSKSNSFQKPNNN) shows a compositional bias: polar residues. A coiled-coil region spans residues 451–515 (EENEIEDNTN…NQNENEDEVK (65 aa)). Residues 458-508 (NTNNNNNNNNNNNNNNNNNNNNNNNNNNNNNNNNTNDNINNNNKNNNNNQN) are compositionally biased toward low complexity. Positions 518-528 (HSPPKVRPPLP) are enriched in pro residues. Low complexity-rich tracts occupy residues 589–646 (TTTA…NNNN), 663–675 (TISTSSPSTTGTI), 686–719 (SQPLNNNNNINNENNNSNNSNSLVTSSSPPLSLP), 764–790 (NSINQPPSNSSPKQSPVPNNPPSVSQS), and 813–853 (NSNS…NNNN). Polar residues predominate over residues 861-876 (LTMSNQSANSLKSSGN). Residues 883–935 (TNGNNNISQNQNQNQNQNQNQTQNQNQNQNQNHISHSNSISSGNLNNHVNQNN) show a composition bias toward low complexity. Positions 1032–1076 (VEENKNLITRTEEMQKMIDSLMKEKKELINEKNTLASMLAKTKQQ) form a coiled coil. The N-terminal Ras-GEF domain maps to 1102–1249 (GKYEIKGGTT…SELKLVFSTP (148 aa)). Positions 1267-1498 (DPAEIARQLT…FNLSLICEPR (232 aa)) constitute a Ras-GEF domain.

Promotes the exchange of Ras-bound GDP by GTP. This chain is Ras guanine nucleotide exchange factor P (gefP), found in Dictyostelium discoideum (Social amoeba).